The following is a 230-amino-acid chain: Inactive 2-(S)-hydroxypropyl-CoM dehydrogenase 2 (230 aa).

It belongs to the short-chain dehydrogenases/reductases (SDR) family.

The sequence is that of Inactive 2-(S)-hydroxypropyl-CoM dehydrogenase 2 from Xanthobacter autotrophicus (strain ATCC BAA-1158 / Py2).